Consider the following 526-residue polypeptide: Fluoride export protein 1 (526 aa).

Disordered stretches follow at residues 1–73 (MMTA…RRAS) and 90–149 (ASNI…KQAG). The Cytoplasmic segment spans residues 1 to 159 (MMTAPSDTEG…VVAKRQKVSR (159 aa)). 2 stretches are compositionally biased toward basic and acidic residues: residues 21–36 (SPDR…DHNH) and 103–123 (PITR…YLRE). The helical transmembrane segment at 160 to 180 (LATELYTISYLIFFSLLGTLA) threads the bilayer. Over 181 to 194 (RLGLQALTSAYPQS) the chain is Extracellular. The helical transmembrane segment at 195-215 (PIIFPSIWPNFAGCVVMGFLA) threads the bilayer. The Cytoplasmic segment spans residues 216–260 (EDRMLFRPDWGQQQPNPKKDDDDDEEAKDIDPAAAKKAHMALKKT). The segment at 223–242 (PDWGQQQPNPKKDDDDDEEA) is disordered. Residues 261-281 (IPLYVGLATGFCGSFTSFSSF) traverse the membrane as a helical segment. The Extracellular segment spans residues 282-310 (IRDIYLALSNDLAAHGSSAAPVSRNGGYS). The helical transmembrane segment at 311–331 (FMALLAVTITTISLSLSGLFA) threads the bilayer. Topologically, residues 332-361 (GAHLAIAIATLFTRFDLGLPYTFVSRILDR) are cytoplasmic. Residues 362–382 (LIVLLGFGCWLGAVLLSIWPP) form a helical membrane-spanning segment. Over 383-398 (DRHSAQPEKERWRGTA) the chain is Extracellular. Residues 399 to 419 (TFALVFAPLGCLTRFYASAHL) form a helical membrane-spanning segment. Over 420 to 424 (NGRLP) the chain is Cytoplasmic. The helical transmembrane segment at 425–445 (SFPLGTFVVNMLGTAVLGMAW) threads the bilayer. Over 446 to 452 (DLNHVPS) the chain is Extracellular. The chain crosses the membrane as a helical span at residues 453-473 (LGGVVGCQVLQGVADGFCGCL). At 474-492 (TTVSTWVSELAALRRRHAY) the chain is on the cytoplasmic side. The chain crosses the membrane as a helical span at residues 493–513 (VYGGASVGGGLALMVVVMGSL). Residues 514 to 526 (RWTEGFGEVKCIS) lie on the Extracellular side of the membrane.

This sequence belongs to the fluoride channel Fluc/FEX (TC 1.A.43) family.

It localises to the cell membrane. It carries out the reaction fluoride(in) = fluoride(out). Functionally, fluoride channel required for the rapid expulsion of cytoplasmic fluoride. The chain is Fluoride export protein 1 from Neurospora crassa (strain ATCC 24698 / 74-OR23-1A / CBS 708.71 / DSM 1257 / FGSC 987).